The chain runs to 121 residues: Parathyroid hormone-related protein (121 aa).

The first 14 residues, Val1–Gly14, serve as a signal peptide directing secretion. Residues Arg15–Leu24 constitute a propeptide that is removed on maturation. Residues Arg47 to His58 are important for receptor binding. Positions Glu61 to Gly121 are disordered. Residues Ser66–Asn80 show a composition bias toward polar residues. Residues Thr98–Lys119 carry the Nuclear localization signal motif. Positions Asn99–Pro108 are enriched in basic and acidic residues. Basic residues predominate over residues Pro112–Gly121.

It belongs to the parathyroid hormone family. As to quaternary structure, PTHrP interacts with PTH1R (via N-terminal extracellular domain).

The protein resides in the secreted. It localises to the cytoplasm. Its subcellular location is the nucleus. Its function is as follows. Neuroendocrine peptide which is a critical regulator of cellular and organ growth, development, migration, differentiation and survival and of epithelial calcium ion transport. Acts by binding to its receptor, PTH1R, activating G protein-coupled receptor signaling. Regulates endochondral bone development and epithelial-mesenchymal interactions during the formation of the mammary glands and teeth. Required for skeletal homeostasis. Promotes mammary mesenchyme differentiation and bud outgrowth by modulating mesenchymal cell responsiveness to BMPs. Up-regulates BMPR1A expression in the mammary mesenchyme and this increases the sensitivity of these cells to BMPs and allows them to respond to BMP4 in a paracrine and/or autocrine fashion. BMP4 signaling in the mesenchyme, in turn, triggers epithelial outgrowth and augments MSX2 expression, which causes the mammary mesenchyme to inhibit hair follicle formation within the nipple sheath. The protein is Parathyroid hormone-related protein (PTHLH) of Ovis aries (Sheep).